A 256-amino-acid polypeptide reads, in one-letter code: 5'-nucleotidase SurE (256 aa).

Positions 9, 10, 40, and 94 each coordinate a divalent metal cation.

This sequence belongs to the SurE nucleotidase family. A divalent metal cation serves as cofactor.

The protein resides in the cytoplasm. It catalyses the reaction a ribonucleoside 5'-phosphate + H2O = a ribonucleoside + phosphate. Nucleotidase that shows phosphatase activity on nucleoside 5'-monophosphates. This chain is 5'-nucleotidase SurE, found in Campylobacter fetus subsp. fetus (strain 82-40).